Consider the following 571-residue polypeptide: DExH-box ATP-dependent RNA helicase DExH16, mitochondrial (571 aa).

A mitochondrion-targeting transit peptide spans 1–56 (MAYSVVRLRKVSALGISRVLQADKGSLWRFHFEPEFGDLLRLGVLTRNYRKNSGSP). Residues 83-212 (IARKKKRKVI…HLCGDPAVVP (130 aa)) form the Helicase ATP-binding domain. 96–103 (GPTNSGKT) is an ATP binding site. The DEIH box; degenerate signature appears at 176–179 (DEIQ). In terms of domain architecture, Helicase C-terminal spans 213–399 (LVEDILKVTG…GLFPTFDLLS (187 aa)).

It belongs to the DExH box helicase family. Homodimer; in free form. Component of the mitochondrial degradosome (mtEXO) complex which is a heteropentamer containing 2 copies of SUPV3L1 and 3 copies of PNPT1. Requires Mg(2+) as cofactor. Mn(2+) serves as cofactor. Weakly expressed.

The protein localises to the nucleus. Its subcellular location is the mitochondrion matrix. The protein resides in the mitochondrion nucleoid. The catalysed reaction is ATP + H2O = ADP + phosphate + H(+). With respect to regulation, activated by the presence of mitochondrial RNA. Functionally, major helicase player in mitochondrial RNA metabolism. Component of the mitochondrial degradosome (mtEXO) complex, that degrades 3' overhang double-stranded RNA with a 3'-to-5' directionality in an ATP-dependent manner. ATPase and ATP-dependent multisubstrate helicase, able to unwind double-stranded (ds) DNA and RNA, and RNA/DNA heteroduplexes in the 5'-to-3' direction. Plays a role in the RNA surveillance system in mitochondria; regulates the stability of mature mRNAs, the removal of aberrantly formed mRNAs and the rapid degradation of non coding processing intermediates. Required during pollen development. In Arabidopsis thaliana (Mouse-ear cress), this protein is DExH-box ATP-dependent RNA helicase DExH16, mitochondrial.